Reading from the N-terminus, the 161-residue chain is Large ribosomal subunit protein uL30m (161 aa).

The transit peptide at 1-34 (MAGILRLVVQRPPGGLQTVTKGVESLIGTDWIRH) directs the protein to the mitochondrion.

This sequence belongs to the universal ribosomal protein uL30 family. In terms of assembly, component of the mitochondrial ribosome large subunit (39S) which comprises a 16S rRNA and about 50 distinct proteins.

It localises to the mitochondrion. The chain is Large ribosomal subunit protein uL30m (MRPL30) from Macaca fascicularis (Crab-eating macaque).